The primary structure comprises 122 residues: Basic phospholipase A2 F16 (122 aa).

Intrachain disulfides connect C26/C115, C28/C44, C43/C95, C49/C122, C50/C88, C57/C81, and C75/C86. 3 residues coordinate Ca(2+): Y27, G29, and G31. The active site involves H47. D48 contributes to the Ca(2+) binding site. D89 is a catalytic residue.

This sequence belongs to the phospholipase A2 family. Group II subfamily. D49 sub-subfamily. Requires Ca(2+) as cofactor. Expressed by the venom gland.

The protein localises to the secreted. It carries out the reaction a 1,2-diacyl-sn-glycero-3-phosphocholine + H2O = a 1-acyl-sn-glycero-3-phosphocholine + a fatty acid + H(+). Its activity is regulated as follows. Pre-incubation with heparin markedly reduces the neurotoxicity of this toxin. Snake venom phospholipase A2 (PLA2) that produces neuromuscular blockade in chick biventer cervicis preparations in the absence and presence of crotapotin. In contrast, in mouse phrenic nerve-diaphragm preparations, the neuromuscular blockade is dependent on crotapotin. PLA2 catalyzes the calcium-dependent hydrolysis of the 2-acyl groups in 3-sn-phosphoglycerides. This is Basic phospholipase A2 F16 from Crotalus durissus terrificus (South American rattlesnake).